A 405-amino-acid polypeptide reads, in one-letter code: Tryptophan synthase beta chain (405 aa).

Lys98 is modified (N6-(pyridoxal phosphate)lysine).

This sequence belongs to the TrpB family. Tetramer of two alpha and two beta chains. Requires pyridoxal 5'-phosphate as cofactor.

The enzyme catalyses (1S,2R)-1-C-(indol-3-yl)glycerol 3-phosphate + L-serine = D-glyceraldehyde 3-phosphate + L-tryptophan + H2O. Its pathway is amino-acid biosynthesis; L-tryptophan biosynthesis; L-tryptophan from chorismate: step 5/5. In terms of biological role, the beta subunit is responsible for the synthesis of L-tryptophan from indole and L-serine. This is Tryptophan synthase beta chain from Xanthomonas oryzae pv. oryzae (strain MAFF 311018).